The following is a 116-amino-acid chain: MPNYRGGRINEEFKREISNIIQNEIKDPRLTAMISVTDVKVTKDLRYAKVYVSIFSTKEEEKKDNFTALKSASGFIRKILGQRINVRHNPEILFELDDSINYAMHIDELIQKVKDK.

It belongs to the RbfA family. As to quaternary structure, monomer. Binds 30S ribosomal subunits, but not 50S ribosomal subunits or 70S ribosomes.

It is found in the cytoplasm. Functionally, one of several proteins that assist in the late maturation steps of the functional core of the 30S ribosomal subunit. Associates with free 30S ribosomal subunits (but not with 30S subunits that are part of 70S ribosomes or polysomes). Required for efficient processing of 16S rRNA. May interact with the 5'-terminal helix region of 16S rRNA. This is Ribosome-binding factor A from Clostridium botulinum (strain Alaska E43 / Type E3).